The chain runs to 113 residues: Putative membrane protein insertion efficiency factor (113 aa).

The protein belongs to the UPF0161 family.

It localises to the cell inner membrane. In terms of biological role, could be involved in insertion of integral membrane proteins into the membrane. The protein is Putative membrane protein insertion efficiency factor of Campylobacter jejuni subsp. jejuni serotype O:2 (strain ATCC 700819 / NCTC 11168).